The chain runs to 131 residues: Small ribosomal subunit protein uS11 (131 aa).

The protein belongs to the universal ribosomal protein uS11 family. As to quaternary structure, part of the 30S ribosomal subunit. Interacts with proteins S7 and S18. Binds to IF-3.

In terms of biological role, located on the platform of the 30S subunit, it bridges several disparate RNA helices of the 16S rRNA. Forms part of the Shine-Dalgarno cleft in the 70S ribosome. This is Small ribosomal subunit protein uS11 from Buchnera aphidicola subsp. Acyrthosiphon pisum (strain 5A).